Consider the following 475-residue polypeptide: Ribulose bisphosphate carboxylase large chain (475 aa).

A propeptide spanning residues 1–2 (MS) is cleaved from the precursor. Pro3 is modified (N-acetylproline). Residue Lys14 is modified to N6,N6,N6-trimethyllysine. Positions 123 and 173 each coordinate substrate. The active-site Proton acceptor is the Lys175. Position 177 (Lys177) interacts with substrate. The Mg(2+) site is built by Lys201, Asp203, and Glu204. Lys201 carries the N6-carboxylysine modification. Residue His294 is the Proton acceptor of the active site. Substrate-binding residues include Arg295, His327, and Ser379.

It belongs to the RuBisCO large chain family. Type I subfamily. In terms of assembly, heterohexadecamer of 8 large chains and 8 small chains; disulfide-linked. The disulfide link is formed within the large subunit homodimers. It depends on Mg(2+) as a cofactor. The disulfide bond which can form in the large chain dimeric partners within the hexadecamer appears to be associated with oxidative stress and protein turnover.

The protein localises to the plastid. It localises to the chloroplast. The catalysed reaction is 2 (2R)-3-phosphoglycerate + 2 H(+) = D-ribulose 1,5-bisphosphate + CO2 + H2O. The enzyme catalyses D-ribulose 1,5-bisphosphate + O2 = 2-phosphoglycolate + (2R)-3-phosphoglycerate + 2 H(+). Its function is as follows. RuBisCO catalyzes two reactions: the carboxylation of D-ribulose 1,5-bisphosphate, the primary event in carbon dioxide fixation, as well as the oxidative fragmentation of the pentose substrate in the photorespiration process. Both reactions occur simultaneously and in competition at the same active site. The chain is Ribulose bisphosphate carboxylase large chain from Eucalyptus globulus subsp. globulus (Tasmanian blue gum).